The following is a 179-amino-acid chain: Large ribosomal subunit protein uL5 (179 aa).

This sequence belongs to the universal ribosomal protein uL5 family. In terms of assembly, part of the 50S ribosomal subunit; part of the 5S rRNA/L5/L18/L25 subcomplex. Contacts the 5S rRNA and the P site tRNA. Forms a bridge to the 30S subunit in the 70S ribosome.

In terms of biological role, this is one of the proteins that bind and probably mediate the attachment of the 5S RNA into the large ribosomal subunit, where it forms part of the central protuberance. In the 70S ribosome it contacts protein S13 of the 30S subunit (bridge B1b), connecting the 2 subunits; this bridge is implicated in subunit movement. Contacts the P site tRNA; the 5S rRNA and some of its associated proteins might help stabilize positioning of ribosome-bound tRNAs. This chain is Large ribosomal subunit protein uL5, found in Shewanella pealeana (strain ATCC 700345 / ANG-SQ1).